The primary structure comprises 326 residues: DnaJ homolog subfamily B member 6 (326 aa).

The J domain maps to 3-69 (DYYEVLGVQK…KKRDIYDRFG (67 aa)). Residues 249–326 (ALPFQPTNTR…KKKKSTKGSY (78 aa)) form a disordered region. Ser-277 carries the phosphoserine modification.

As to quaternary structure, homooligomer.

The protein resides in the cytoplasm. Its subcellular location is the perinuclear region. It localises to the nucleus. Functionally, has a stimulatory effect on the ATPase activity of HSP70 in a dose-dependent and time-dependent manner and hence acts as a co-chaperone of HSP70. Plays an indispensable role in the organization of KRT8/KRT18 filaments. Acts as an endogenous molecular chaperone for neuronal proteins including huntingtin. Suppresses aggregation and toxicity of polyglutamine-containing, aggregation-prone proteins. Also reduces cellular toxicity and caspase-3 activity. The protein is DnaJ homolog subfamily B member 6 of Gallus gallus (Chicken).